The primary structure comprises 202 residues: D-alanyl-D-alanine dipeptidase (202 aa).

Positions 116 and 123 each coordinate Zn(2+). E181 functions as the Proton donor/acceptor in the catalytic mechanism. A Zn(2+)-binding site is contributed by H184.

It belongs to the peptidase M15D family. In terms of assembly, homodimer. Requires Zn(2+) as cofactor. It depends on Fe(2+) as a cofactor. The cofactor is Co(2+). Ni(2+) serves as cofactor.

The enzyme catalyses D-alanyl-D-alanine + H2O = 2 D-alanine. Inhibited by aminoalkyl phosphinate analogs. In terms of biological role, catalyzes hydrolysis of the D-alanyl-D-alanine dipeptide. The sequence is that of D-alanyl-D-alanine dipeptidase (vanX) from Enterococcus faecium (Streptococcus faecium).